Consider the following 517-residue polypeptide: V-type proton ATPase subunit B (517 aa).

Ser4 is modified (phosphoserine). Residue Lys14 forms a Glycyl lysine isopeptide (Lys-Gly) (interchain with G-Cter in ubiquitin) linkage. Position 137 is a phosphoserine (Ser137). Residue Arg381 participates in ATP binding. Positions 487–517 are disordered; the sequence is RARDDADEDEEDPDTRSSGKKKDASQEESLI. Positions 500 to 511 are enriched in basic and acidic residues; it reads DTRSSGKKKDAS. Phosphoserine is present on residues Ser503 and Ser504. Residue Lys508 forms a Glycyl lysine isopeptide (Lys-Gly) (interchain with G-Cter in ubiquitin) linkage. Residue Ser511 is modified to Phosphoserine; by ATM or ATR. Phosphoserine is present on Ser515.

This sequence belongs to the ATPase alpha/beta chains family. V-ATPase is a heteromultimeric enzyme composed of a peripheral catalytic V1 complex (components A to H) attached to an integral membrane V0 proton pore complex (components: a, c, c', c'', d, e, f and VOA1). Interacts with RAV1 and RAV2 components of the RAVE complex, which are essential for the stability and assembly of V-ATPase.

The protein localises to the vacuole membrane. In terms of biological role, non-catalytic subunit of the V1 complex of vacuolar(H+)-ATPase (V-ATPase), a multisubunit enzyme composed of a peripheral complex (V1) that hydrolyzes ATP and a membrane integral complex (V0) that translocates protons. V-ATPase is responsible for acidifying and maintaining the pH of intracellular compartments. In Saccharomyces cerevisiae (strain ATCC 204508 / S288c) (Baker's yeast), this protein is V-type proton ATPase subunit B (VMA2).